Consider the following 393-residue polypeptide: Flap endonuclease 1 (393 aa).

Residues methionine 1–alanine 108 are N-domain. Aspartate 34 provides a ligand contact to Mg(2+). Arginine 74 serves as a coordination point for DNA. Residue aspartate 90 coordinates Mg(2+). Residues serine 99 to glutamate 120 are compositionally biased toward basic and acidic residues. The interval serine 99 to methionine 127 is disordered. An I-domain region spans residues alanine 126–tyrosine 257. The Mg(2+) site is built by glutamate 162, glutamate 164, aspartate 183, and aspartate 185. Glutamate 162 contacts DNA. 2 residues coordinate DNA: glycine 235 and aspartate 237. Aspartate 237 contacts Mg(2+). Residues threonine 340 to phenylalanine 348 form an interaction with PCNA region. The disordered stretch occupies residues asparagine 358–lysine 393. Over residues serine 384–lysine 393 the composition is skewed to basic residues.

The protein belongs to the XPG/RAD2 endonuclease family. FEN1 subfamily. As to quaternary structure, interacts with PCNA. Three molecules of FEN1 bind to one PCNA trimer with each molecule binding to one PCNA monomer. PCNA stimulates the nuclease activity without altering cleavage specificity. The cofactor is Mg(2+). Phosphorylated. Phosphorylation upon DNA damage induces relocalization to the nuclear plasma.

It localises to the nucleus. It is found in the nucleolus. The protein localises to the nucleoplasm. Its subcellular location is the mitochondrion. In terms of biological role, structure-specific nuclease with 5'-flap endonuclease and 5'-3' exonuclease activities involved in DNA replication and repair. During DNA replication, cleaves the 5'-overhanging flap structure that is generated by displacement synthesis when DNA polymerase encounters the 5'-end of a downstream Okazaki fragment. It enters the flap from the 5'-end and then tracks to cleave the flap base, leaving a nick for ligation. Also involved in the long patch base excision repair (LP-BER) pathway, by cleaving within the apurinic/apyrimidinic (AP) site-terminated flap. Acts as a genome stabilization factor that prevents flaps from equilibrating into structures that lead to duplications and deletions. Also possesses 5'-3' exonuclease activity on nicked or gapped double-stranded DNA, and exhibits RNase H activity. Also involved in replication and repair of rDNA and in repairing mitochondrial DNA. The polypeptide is Flap endonuclease 1 (Trypanosoma brucei brucei (strain 927/4 GUTat10.1)).